Here is a 231-residue protein sequence, read N- to C-terminus: Large ribosomal subunit protein uL3 (231 aa).

Gln-151 is modified (N5-methylglutamine).

The protein belongs to the universal ribosomal protein uL3 family. In terms of assembly, part of the 50S ribosomal subunit. Forms a cluster with proteins L14 and L19. In terms of processing, methylated by PrmB.

Functionally, one of the primary rRNA binding proteins, it binds directly near the 3'-end of the 23S rRNA, where it nucleates assembly of the 50S subunit. The chain is Large ribosomal subunit protein uL3 from Ehrlichia canis (strain Jake).